The primary structure comprises 431 residues: Urokinase-type plasminogen activator (431 aa).

The first 20 residues, 1-20, serve as a signal peptide directing secretion; it reads MRALLARLLLCVLVVSDSKG. Positions 27–63 constitute an EGF-like domain; it reads VPSNCDCLNGGTCVSNKYFSNIHWCNCPKKFGGQHCE. Cystine bridges form between C31–C39, C33–C51, C53–C62, C70–C151, C91–C133, and C122–C146. The tract at residues 34–57 is binds urokinase plasminogen activator surface receptor; sequence LNGGTCVSNKYFSNIHWCNCPKKF. T38 carries an O-linked (Fuc) threonine glycan. The region spanning 70–151 is the Kringle domain; that stretch reads CYEGNGHFYR…LVQECMVHDC (82 aa). The tract at residues 152–177 is connecting peptide; the sequence is ADGKKPSSPPEELKFQCGQKTLRPRF. S158 is subject to Phosphoserine. Cystine bridges form between C168–C299, C209–C225, C217–C288, C313–C382, C345–C361, and C372–C400. In terms of domain architecture, Peptidase S1 spans 179 to 424; the sequence is IIGGEFTTIE…FLPWIRSHTK (246 aa). Active-site charge relay system residues include H224 and D275. The N-linked (GlcNAc...) asparagine glycan is linked to N322. A Phosphoserine modification is found at S323. The active-site Charge relay system is the S376.

The protein belongs to the peptidase S1 family. Found in high and low molecular mass forms. Each consists of two chains, A and B. The high molecular mass form contains a long chain A which is cleaved to yield a short chain A. Forms heterodimer with SERPINA5. Binds LRP1B; binding is followed by internalization and degradation. Interacts with MRC2. Interacts with PLAUR. In complex with SERPINE1, interacts with PLAUR/uPAR. Interacts with SORL1 and LRP1, either alone or in complex with SERPINE1; these interactions are abolished in the presence of LRPAP1/RAP. The ternary complex composed of PLAUR-PLAU-PAI1 also interacts with SORLA. Phosphorylation of Ser-158 and Ser-323 abolishes proadhesive ability but does not interfere with receptor binding. Post-translationally, produced as an inactive single-chain protein (pro-uPA or sc-uPA), is processed into the active disulfide-linked two-chain form of PLAU/uPA by a proteolytic event mediated, at least, by TMPRSS4. As to expression, expressed in the prostate gland and prostate cancers.

It localises to the secreted. It catalyses the reaction Specific cleavage of Arg-|-Val bond in plasminogen to form plasmin.. With respect to regulation, inhibited by SERPINA5. Inhibited by SERPINE1. In terms of biological role, specifically cleaves the zymogen plasminogen to form the active enzyme plasmin. This Homo sapiens (Human) protein is Urokinase-type plasminogen activator.